A 209-amino-acid chain; its full sequence is Orotate phosphoribosyltransferase (209 aa).

5-phospho-alpha-D-ribose 1-diphosphate is bound by residues Arg-96, Lys-100, His-102, and 122-130 (EDLISTGKS). Residue Ser-126 participates in orotate binding.

It belongs to the purine/pyrimidine phosphoribosyltransferase family. PyrE subfamily. In terms of assembly, homodimer. The cofactor is Mg(2+).

The catalysed reaction is orotidine 5'-phosphate + diphosphate = orotate + 5-phospho-alpha-D-ribose 1-diphosphate. The protein operates within pyrimidine metabolism; UMP biosynthesis via de novo pathway; UMP from orotate: step 1/2. Functionally, catalyzes the transfer of a ribosyl phosphate group from 5-phosphoribose 1-diphosphate to orotate, leading to the formation of orotidine monophosphate (OMP). This is Orotate phosphoribosyltransferase from Coxiella burnetii (strain RSA 493 / Nine Mile phase I).